The primary structure comprises 588 residues: Proteasome-associated ATPase (588 aa).

The segment covering 1–10 (MAAHDDDMNR) has biased composition (basic and acidic residues). Positions 1–23 (MAAHDDDMNRGIRPGRGSDDPSG) are disordered. Residues 47-94 (RILEERIVELQTNLAGVSAQNERLANTLREARDQIVALKEEVDRLAQP) adopt a coiled-coil conformation. 276-281 (GCGKTL) contacts ATP. The interval 587–588 (YL) is docks into pockets in the proteasome alpha-ring.

This sequence belongs to the AAA ATPase family. As to quaternary structure, homohexamer. Assembles into a hexameric ring structure that caps the 20S proteasome core. Strongly interacts with the prokaryotic ubiquitin-like protein Pup through a hydrophobic interface; the interacting region of ARC lies in its N-terminal coiled-coil domain. There is one Pup binding site per ARC hexamer ring. Upon ATP-binding, the C-terminus of ARC interacts with the alpha-rings of the proteasome core, possibly by binding to the intersubunit pockets.

Its pathway is protein degradation; proteasomal Pup-dependent pathway. In terms of biological role, ATPase which is responsible for recognizing, binding, unfolding and translocation of pupylated proteins into the bacterial 20S proteasome core particle. May be essential for opening the gate of the 20S proteasome via an interaction with its C-terminus, thereby allowing substrate entry and access to the site of proteolysis. Thus, the C-termini of the proteasomal ATPase may function like a 'key in a lock' to induce gate opening and therefore regulate proteolysis. This chain is Proteasome-associated ATPase, found in Streptomyces scabiei (strain 87.22).